We begin with the raw amino-acid sequence, 457 residues long: Transmembrane protein 143 (457 aa).

Helical transmembrane passes span 264–284 (ILNV…GMVV) and 285–305 (LSDL…FMGL). Ser316 carries the post-translational modification Phosphoserine. Polar residues predominate over residues 429–439 (LSSPKSAPSDD). The disordered stretch occupies residues 429-457 (LSSPKSAPSDDNSLEKPLGPAQPSHLVGN).

The protein localises to the membrane. This chain is Transmembrane protein 143 (TMEM143), found in Bos taurus (Bovine).